We begin with the raw amino-acid sequence, 181 residues long: Dual-action ribosomal maturation protein DarP (181 aa).

A disordered region spans residues 1-24 (MTGIKRPMSQYQDDNEWEDWGPSK).

It belongs to the DarP family.

The protein localises to the cytoplasm. Functionally, member of a network of 50S ribosomal subunit biogenesis factors which assembles along the 30S-50S interface, preventing incorrect 23S rRNA structures from forming. Promotes peptidyl transferase center (PTC) maturation. This chain is Dual-action ribosomal maturation protein DarP, found in Aeromonas hydrophila subsp. hydrophila (strain ATCC 7966 / DSM 30187 / BCRC 13018 / CCUG 14551 / JCM 1027 / KCTC 2358 / NCIMB 9240 / NCTC 8049).